The primary structure comprises 205 residues: Urease accessory protein UreG (205 aa).

11-18 (GPVGSGKT) is a binding site for GTP.

It belongs to the SIMIBI class G3E GTPase family. UreG subfamily. Homodimer. UreD, UreF and UreG form a complex that acts as a GTP-hydrolysis-dependent molecular chaperone, activating the urease apoprotein by helping to assemble the nickel containing metallocenter of UreC. The UreE protein probably delivers the nickel.

It is found in the cytoplasm. Its function is as follows. Facilitates the functional incorporation of the urease nickel metallocenter. This process requires GTP hydrolysis, probably effectuated by UreG. The sequence is that of Urease accessory protein UreG from Prochlorococcus marinus (strain NATL2A).